The following is a 476-amino-acid chain: Cysteine--tRNA ligase (476 aa).

Cysteine 28 provides a ligand contact to Zn(2+). The 'HIGH' region signature appears at 30–40 (PTVYDHTHLGH). Positions 208, 233, and 237 each coordinate Zn(2+). Positions 265-269 (KMSKS) match the 'KMSKS' region motif. An ATP-binding site is contributed by lysine 268.

This sequence belongs to the class-I aminoacyl-tRNA synthetase family. Zn(2+) serves as cofactor.

The protein resides in the cytoplasm. The catalysed reaction is tRNA(Cys) + L-cysteine + ATP = L-cysteinyl-tRNA(Cys) + AMP + diphosphate. This is Cysteine--tRNA ligase from Methanococcus maripaludis (strain C7 / ATCC BAA-1331).